A 144-amino-acid polypeptide reads, in one-letter code: Large-conductance mechanosensitive channel (144 aa).

The next 2 membrane-spanning stretches (helical) occupy residues 21 to 41 and 76 to 96; these read VGII…ANVI and GIFL…FCII. The disordered stretch occupies residues 105-144; the sequence is QRGGKTRRAVQTECGRDAAYRDPRSLETTKQRHGAGYNDD. Positions 118-134 are enriched in basic and acidic residues; that stretch reads CGRDAAYRDPRSLETTK.

This sequence belongs to the MscL family. In terms of assembly, homopentamer.

The protein resides in the cell inner membrane. Channel that opens in response to stretch forces in the membrane lipid bilayer. May participate in the regulation of osmotic pressure changes within the cell. The protein is Large-conductance mechanosensitive channel of Sodalis glossinidius (strain morsitans).